A 278-amino-acid polypeptide reads, in one-letter code: Large ribosomal subunit protein uL2 (278 aa).

Disordered stretches follow at residues 1–20 (MGIR…SVSD) and 225–278 (VMNP…GKKR). The segment covering 258–278 (RNKKKASSRLIVRRRKSGKKR) has biased composition (basic residues).

This sequence belongs to the universal ribosomal protein uL2 family. In terms of assembly, part of the 50S ribosomal subunit. Forms a bridge to the 30S subunit in the 70S ribosome.

Its function is as follows. One of the primary rRNA binding proteins. Required for association of the 30S and 50S subunits to form the 70S ribosome, for tRNA binding and peptide bond formation. It has been suggested to have peptidyltransferase activity; this is somewhat controversial. Makes several contacts with the 16S rRNA in the 70S ribosome. This is Large ribosomal subunit protein uL2 from Cutibacterium acnes (strain DSM 16379 / KPA171202) (Propionibacterium acnes).